Here is a 230-residue protein sequence, read N- to C-terminus: MDSLYDISCFAAGLAGNIFALALFLSPVTTFKRILKAKSTERFDGLPYLFSLLNCLICLWYGLPWVADGRLLVATVNGIGAVFQLAYICLFIFYADSRKTRMKIIGLLVLVVCGFALVSHASVFFFDQPLRQQFVGAVSMASLISMFASPLAVMGVVIRSESVEFMPFYLSLSTFLMSASFALYGLLLRDFFIYFPNGLGLILGAMQLALYAYYSRKWRGQDSSAPLLLA.

Residues 1–6 (MDSLYD) are Extracellular-facing. Residues 7–27 (ISCFAAGLAGNIFALALFLSP) traverse the membrane as a helical segment. Positions 13-98 (GLAGNIFALA…CLFIFYADSR (86 aa)) constitute a MtN3/slv 1 domain. Residues 28-45 (VTTFKRILKAKSTERFDG) lie on the Cytoplasmic side of the membrane. The helical transmembrane segment at 46 to 66 (LPYLFSLLNCLICLWYGLPWV) threads the bilayer. Over 67-72 (ADGRLL) the chain is Extracellular. The chain crosses the membrane as a helical span at residues 73-93 (VATVNGIGAVFQLAYICLFIF). The Cytoplasmic segment spans residues 94–103 (YADSRKTRMK). Residues 104 to 124 (IIGLLVLVVCGFALVSHASVF) form a helical membrane-spanning segment. Topologically, residues 125-137 (FFDQPLRQQFVGA) are extracellular. Positions 133-217 (QFVGAVSMAS…LALYAYYSRK (85 aa)) constitute a MtN3/slv 2 domain. Residues 138–158 (VSMASLISMFASPLAVMGVVI) form a helical membrane-spanning segment. The Cytoplasmic segment spans residues 159 to 167 (RSESVEFMP). The helical transmembrane segment at 168-188 (FYLSLSTFLMSASFALYGLLL) threads the bilayer. Residues 189 to 190 (RD) lie on the Extracellular side of the membrane. The chain crosses the membrane as a helical span at residues 191 to 211 (FFIYFPNGLGLILGAMQLALY). The Cytoplasmic portion of the chain corresponds to 212 to 230 (AYYSRKWRGQDSSAPLLLA).

Belongs to the SWEET sugar transporter family. As to quaternary structure, forms homooligomers and/or heterooligomers.

The protein resides in the cell membrane. Mediates both low-affinity uptake and efflux of sugar across the plasma membrane. The protein is Bidirectional sugar transporter SWEET2b (SWEET2B) of Oryza sativa subsp. indica (Rice).